The sequence spans 620 residues: Chaperone protein HscA homolog (620 aa).

The protein belongs to the heat shock protein 70 family.

Functionally, chaperone involved in the maturation of iron-sulfur cluster-containing proteins. Has a low intrinsic ATPase activity which is markedly stimulated by HscB. This is Chaperone protein HscA homolog from Neisseria meningitidis serogroup B (strain ATCC BAA-335 / MC58).